A 436-amino-acid polypeptide reads, in one-letter code: Ribulose bisphosphate carboxylase large chain (436 aa).

Substrate contacts are provided by N104 and T154. K156 (proton acceptor) is an active-site residue. K158 contributes to the substrate binding site. Mg(2+)-binding residues include K182, D184, and E185. K182 carries the N6-carboxylysine modification. The active-site Proton acceptor is H275. Substrate contacts are provided by R276, H308, and S360.

Belongs to the RuBisCO large chain family. Type I subfamily. As to quaternary structure, heterohexadecamer of 8 large chains and 8 small chains; disulfide-linked. The disulfide link is formed within the large subunit homodimers. Requires Mg(2+) as cofactor. In terms of processing, the disulfide bond which can form in the large chain dimeric partners within the hexadecamer appears to be associated with oxidative stress and protein turnover.

It localises to the plastid. The protein localises to the chloroplast. It catalyses the reaction 2 (2R)-3-phosphoglycerate + 2 H(+) = D-ribulose 1,5-bisphosphate + CO2 + H2O. It carries out the reaction D-ribulose 1,5-bisphosphate + O2 = 2-phosphoglycolate + (2R)-3-phosphoglycerate + 2 H(+). RuBisCO catalyzes two reactions: the carboxylation of D-ribulose 1,5-bisphosphate, the primary event in carbon dioxide fixation, as well as the oxidative fragmentation of the pentose substrate in the photorespiration process. Both reactions occur simultaneously and in competition at the same active site. The sequence is that of Ribulose bisphosphate carboxylase large chain from Euglena anabaena (Euglenaria anabaena).